The following is a 374-amino-acid chain: Putative L-lysine 2,3-aminomutase aq_1632 (374 aa).

The Radical SAM core domain maps to 86-314; sequence HKYPDTALLL…ARVRYVMSHE (229 aa). Residues C100, C104, and C107 each coordinate [4Fe-4S] cluster. An N6-(pyridoxal phosphate)lysine modification is found at K317.

This sequence belongs to the radical SAM superfamily. KamA family. [4Fe-4S] cluster is required as a cofactor. It depends on pyridoxal 5'-phosphate as a cofactor.

The polypeptide is Putative L-lysine 2,3-aminomutase aq_1632 (Aquifex aeolicus (strain VF5)).